The sequence spans 481 residues: Glutamate--tRNA ligase (481 aa).

A 'HIGH' region motif is present at residues 9–19 (PSPTGNLHIGT). The short motif at 249 to 253 (KLSKR) is the 'KMSKS' region element. Lys252 provides a ligand contact to ATP.

This sequence belongs to the class-I aminoacyl-tRNA synthetase family. Glutamate--tRNA ligase type 1 subfamily. In terms of assembly, monomer.

The protein localises to the cytoplasm. The catalysed reaction is tRNA(Glu) + L-glutamate + ATP = L-glutamyl-tRNA(Glu) + AMP + diphosphate. In terms of biological role, catalyzes the attachment of glutamate to tRNA(Glu) in a two-step reaction: glutamate is first activated by ATP to form Glu-AMP and then transferred to the acceptor end of tRNA(Glu). The sequence is that of Glutamate--tRNA ligase from Picosynechococcus sp. (strain ATCC 27264 / PCC 7002 / PR-6) (Agmenellum quadruplicatum).